The following is an 840-amino-acid chain: DNA mismatch repair protein MutS (840 aa).

601-608 (GPNMSGKS) contributes to the ATP binding site.

It belongs to the DNA mismatch repair MutS family.

Functionally, this protein is involved in the repair of mismatches in DNA. It is possible that it carries out the mismatch recognition step. This protein has a weak ATPase activity. The chain is DNA mismatch repair protein MutS from Lactococcus lactis subsp. cremoris (strain SK11).